The chain runs to 517 residues: Cytochrome P450 78A5 (517 aa).

A helical transmembrane segment spans residues 20–40; the sequence is AFASVSLIIATVAFLLSPGGL. Cys459 is a binding site for heme.

Belongs to the cytochrome P450 family. Heme serves as cofactor. In terms of tissue distribution, expressed in the periphery of the shoot apical meristem and inflorescence meristem, on the adaxial sides of developing floral organs and in developing ovules in the region where the integuments emerge.

The protein localises to the membrane. Functionally, plays a role in regulating directional growth at the meristem/organ boundary. Is required for the promotion of leaf and floral organ growth and for the prolongation of the plastochron. Promotes organ growth in a non-cell-autonomous manner and may generate a mobile growth signal distinct from the classical phytohormones that prevents premature arrest of proliferation, until the correct primordium size has been reached. Functions probably in association with CYP78A7 in regulating relative growth of the shoot apical meristem and plant organs. Is required locally in developing ovules to stimulates cell proliferation and promote seed growth. This chain is Cytochrome P450 78A5 (CYP78A5), found in Arabidopsis thaliana (Mouse-ear cress).